Here is a 25-residue protein sequence, read N- to C-terminus: Superoxide dismutase [Mn], mitochondrial (25 aa).

Position 9 (H9) interacts with Mn(2+).

It belongs to the iron/manganese superoxide dismutase family. Homotetramer. It depends on Mn(2+) as a cofactor.

Its subcellular location is the mitochondrion matrix. It carries out the reaction 2 superoxide + 2 H(+) = H2O2 + O2. Functionally, destroys superoxide anion radicals which are normally produced within the cells and which are toxic to biological systems. This chain is Superoxide dismutase [Mn], mitochondrial, found in Alternaria alternata (Alternaria rot fungus).